The sequence spans 282 residues: Pantothenate synthetase (282 aa).

26–33 (MGNLHEGH) contributes to the ATP binding site. Catalysis depends on histidine 33, which acts as the Proton donor. Glutamine 57 provides a ligand contact to (R)-pantoate. Glutamine 57 lines the beta-alanine pocket. 144–147 (GKKD) serves as a coordination point for ATP. Glutamine 150 contacts (R)-pantoate. Residues valine 173 and 181-184 (LSSR) contribute to the ATP site.

This sequence belongs to the pantothenate synthetase family. As to quaternary structure, homodimer.

The protein resides in the cytoplasm. The enzyme catalyses (R)-pantoate + beta-alanine + ATP = (R)-pantothenate + AMP + diphosphate + H(+). It functions in the pathway cofactor biosynthesis; (R)-pantothenate biosynthesis; (R)-pantothenate from (R)-pantoate and beta-alanine: step 1/1. Functionally, catalyzes the condensation of pantoate with beta-alanine in an ATP-dependent reaction via a pantoyl-adenylate intermediate. The polypeptide is Pantothenate synthetase (Cupriavidus taiwanensis (strain DSM 17343 / BCRC 17206 / CCUG 44338 / CIP 107171 / LMG 19424 / R1) (Ralstonia taiwanensis (strain LMG 19424))).